Consider the following 297-residue polypeptide: MAAARPDPPIPSSPTRESPSPEPPDLVLVPDGRPVTPPGDLIEIQVVKVTDTTSVPEPPEPGSFHCALCPAAFRLVSELLFHEHGHLASMEGLGQDGDPSRCHVCGHSCPGPASLRAHYSLHTGERPYRCSLCPRAFKALAPLLRHQHRHGVEPGTSERLLPTTTTGQPNSRVAQERSEVVMAAAAAGAVVGKPFACRFCAKPFRRSSDMRDHERVHTGERPYHCSICGKGFTQSSVLSGHARIHTGERPFRCMLCDRTFNNSSNFRKHQRTHFHGPGSGVGESRGQLRSSSVSQES.

Pro residues predominate over residues 1 to 12 (MAAARPDPPIPS). The segment at 1–39 (MAAARPDPPIPSSPTRESPSPEPPDLVLVPDGRPVTPPG) is disordered. The residue at position 13 (serine 13) is a Phosphoserine. C2H2-type zinc fingers lie at residues 64 to 86 (FHCA…EHGH), 100 to 122 (SRCH…YSLH), and 128 to 150 (YRCS…QHRH). The tract at residues 149–175 (RHGVEPGTSERLLPTTTTGQPNSRVAQ) is disordered. Residues 162 to 173 (PTTTTGQPNSRV) show a composition bias toward polar residues. 3 consecutive C2H2-type zinc fingers follow at residues 195–217 (FACR…ERVH), 223–245 (YHCS…ARIH), and 251–273 (FRCM…QRTH). The segment at 268-297 (KHQRTHFHGPGSGVGESRGQLRSSSVSQES) is disordered. Positions 287–297 (QLRSSSVSQES) are enriched in polar residues.

It belongs to the krueppel C2H2-type zinc-finger protein family.

It is found in the nucleus. In terms of biological role, may be involved in transcriptional regulation. In Mus musculus (Mouse), this protein is Zinc finger protein 784 (Znf784).